A 615-amino-acid polypeptide reads, in one-letter code: Chaperone protein HscA (615 aa).

The protein belongs to the heat shock protein 70 family.

Chaperone involved in the maturation of iron-sulfur cluster-containing proteins. Has a low intrinsic ATPase activity which is markedly stimulated by HscB. Involved in the maturation of IscU. The polypeptide is Chaperone protein HscA (Xenorhabdus nematophila (strain ATCC 19061 / DSM 3370 / CCUG 14189 / LMG 1036 / NCIMB 9965 / AN6)).